Here is a 228-residue protein sequence, read N- to C-terminus: Cytidylate kinase (228 aa).

Position 17–25 (17–25 (GPTASGKGT)) interacts with ATP.

Belongs to the cytidylate kinase family. Type 1 subfamily.

It localises to the cytoplasm. It catalyses the reaction CMP + ATP = CDP + ADP. The catalysed reaction is dCMP + ATP = dCDP + ADP. In Burkholderia thailandensis (strain ATCC 700388 / DSM 13276 / CCUG 48851 / CIP 106301 / E264), this protein is Cytidylate kinase.